The primary structure comprises 94 residues: Large ribosomal subunit protein uL29 (94 aa).

Residues 66–94 (NPGERKSRVLSRAKRKKKNLARLSAKVKG) are disordered. Over residues 73 to 94 (RVLSRAKRKKKNLARLSAKVKG) the composition is skewed to basic residues.

This sequence belongs to the universal ribosomal protein uL29 family.

This chain is Large ribosomal subunit protein uL29, found in Leptospira borgpetersenii serovar Hardjo-bovis (strain JB197).